The chain runs to 298 residues: (DL)-glycerol-3-phosphatase 1, mitochondrial (298 aa).

The transit peptide at 1-46 (MLTTPTRFVALRIPFRSSNKIPISIAPSPKVFPRKPVIRVPASLRF) directs the protein to the mitochondrion. The active-site Nucleophile is D77. The Mg(2+) site is built by D77, D79, and D242. Residue D79 is the Proton donor of the active site.

It belongs to the HAD-like hydrolase superfamily. DOG/GPP family. The cofactor is Mg(2+). As to expression, ubiquitous with highest expression in siliques. Mainly restricted to the meristem of immature flower and vascular elements of the root, shoot, leave, siliqua and developing embryo (at the protein level).

It localises to the mitochondrion. The enzyme catalyses sn-glycerol 1-phosphate + H2O = glycerol + phosphate. It catalyses the reaction sn-glycerol 3-phosphate + H2O = glycerol + phosphate. It carries out the reaction 5-amino-6-(5-phospho-D-ribitylamino)uracil + H2O = 5-amino-6-(D-ribitylamino)uracil + phosphate. Functionally, acts as a glycerol-3-phosphatase with higher stereospecificity for L-glycerol-3-phosphate than DL-glycerol-3-phosphate. Can also dephosphorylate in vitro 5-amino-6-(5-phospho-D-ribitylamino)uracil, also known as ARPP. This is (DL)-glycerol-3-phosphatase 1, mitochondrial from Arabidopsis thaliana (Mouse-ear cress).